Here is a 203-residue protein sequence, read N- to C-terminus: ATP-dependent Clp protease proteolytic subunit (203 aa).

Residue Ser-107 is the Nucleophile of the active site. The active site involves His-132.

It belongs to the peptidase S14 family. In terms of assembly, fourteen ClpP subunits assemble into 2 heptameric rings which stack back to back to give a disk-like structure with a central cavity, resembling the structure of eukaryotic proteasomes.

It is found in the cytoplasm. The catalysed reaction is Hydrolysis of proteins to small peptides in the presence of ATP and magnesium. alpha-casein is the usual test substrate. In the absence of ATP, only oligopeptides shorter than five residues are hydrolyzed (such as succinyl-Leu-Tyr-|-NHMec, and Leu-Tyr-Leu-|-Tyr-Trp, in which cleavage of the -Tyr-|-Leu- and -Tyr-|-Trp bonds also occurs).. Functionally, cleaves peptides in various proteins in a process that requires ATP hydrolysis. Has a chymotrypsin-like activity. Plays a major role in the degradation of misfolded proteins. This chain is ATP-dependent Clp protease proteolytic subunit, found in Pelagibacter ubique (strain HTCC1062).